The primary structure comprises 693 residues: Golgin subfamily A member 6B (693 aa).

A compositionally biased stretch (pro residues) spans 1-11 (MWPQPYLPPHP). Disordered stretches follow at residues 1–72 (MWPQ…SQYQ), 497–551 (LPGE…VERR), 629–650 (NPAD…AGEQ), and 660–679 (NNVE…DNPT). A coiled-coil region spans residues 77-611 (ALESSSVTIS…KLLELQELVL (535 aa)). The segment covering 537–551 (LPKEKADGTEQVERR) has biased composition (basic and acidic residues).

This sequence belongs to the GOLGA6 family.

In Homo sapiens (Human), this protein is Golgin subfamily A member 6B (GOLGA6B).